The primary structure comprises 104 residues: ATP-dependent Clp protease adapter protein ClpS (104 aa).

Belongs to the ClpS family. As to quaternary structure, binds to the N-terminal domain of the chaperone ClpA.

Involved in the modulation of the specificity of the ClpAP-mediated ATP-dependent protein degradation. The protein is ATP-dependent Clp protease adapter protein ClpS of Nitratidesulfovibrio vulgaris (strain ATCC 29579 / DSM 644 / CCUG 34227 / NCIMB 8303 / VKM B-1760 / Hildenborough) (Desulfovibrio vulgaris).